A 232-amino-acid polypeptide reads, in one-letter code: Aprataxin-like protein (232 aa).

The HIT domain maps to 38-160 (LKVYIESPES…MTLDHVSPSL (123 aa)). Interaction with DNA regions lie at residues 63 to 67 (DMFPK), 138 to 149 (HAGPSMNNLHLH), and 161 to 165 (KNSAH). The active-site Nucleophile is histidine 147. The Zn(2+) site is built by cysteine 200 and cysteine 203. Residues 209-212 (RHFT) are interaction with DNA. Zn(2+) contacts are provided by histidine 217 and glutamate 221.

Monomer.

It is found in the nucleus. It localises to the cytoplasm. The catalysed reaction is a 5'-end adenosine-5'-diphospho-5'-2'-deoxyribonucleoside-DNA + H2O = a 5'-end 5'-phospho-2'-deoxyribonucleoside-DNA + AMP + 2 H(+). It carries out the reaction a 5'-end adenosine-5'-diphospho-5'-ribonucleoside-2'-deoxyribonucleotide-DNA + H2O = a 5'-end 5'-phospho-ribonucleoside-2'-deoxyribonucleotide-DNA + AMP + 2 H(+). It catalyses the reaction a 3'-end 2'-deoxyribonucleotide-3'-diphospho-5'-guanosine-DNA + H2O = a 3'-end 2'-deoxyribonucleotide 3'-phosphate-DNA + GMP + 2 H(+). Its function is as follows. DNA-binding protein involved in single-strand DNA break repair, double-strand DNA break repair and base excision repair. Resolves abortive DNA ligation intermediates formed either at base excision sites, or when DNA ligases attempt to repair non-ligatable breaks induced by reactive oxygen species. Catalyzes the release of adenylate groups covalently linked to 5'-phosphate termini, resulting in the production of 5'-phosphate termini that can be efficiently rejoined. Likewise, catalyzes the release of 3'-linked guanosine (DNAppG) and inosine (DNAppI) from DNA, but has higher specific activity with 5'-linked adenosine (AppDNA). The chain is Aprataxin-like protein (hnt3) from Schizosaccharomyces pombe (strain 972 / ATCC 24843) (Fission yeast).